The sequence spans 261 residues: Ethanolamine ammonia-lyase small subunit (261 aa).

Residues valine 158, glutamate 179, and cysteine 208 each coordinate adenosylcob(III)alamin.

Belongs to the EutC family. In terms of assembly, the basic unit is a heterodimer which dimerizes to form tetramers. The heterotetramers trimerize; 6 large subunits form a core ring with 6 small subunits projecting outwards. It depends on adenosylcob(III)alamin as a cofactor.

The protein localises to the bacterial microcompartment. It carries out the reaction ethanolamine = acetaldehyde + NH4(+). It participates in amine and polyamine degradation; ethanolamine degradation. Functionally, catalyzes the deamination of various vicinal amino-alcohols to oxo compounds. Allows this organism to utilize ethanolamine as the sole source of nitrogen and carbon in the presence of external vitamin B12. The chain is Ethanolamine ammonia-lyase small subunit from Bradyrhizobium diazoefficiens (strain JCM 10833 / BCRC 13528 / IAM 13628 / NBRC 14792 / USDA 110).